The following is an 863-amino-acid chain: Glycerol-3-phosphate acyltransferase (863 aa).

The disordered stretch occupies residues 1–29 (MPKKNSPLLPKETTTTQSSVDTSGSSNLT). Residues 12-29 (ETTTTQSSVDTSGSSNLT) are compositionally biased toward polar residues. An HXXXXD motif motif is present at residues 343–348 (SHRSHI).

The protein belongs to the GPAT/DAPAT family.

It localises to the cell inner membrane. The enzyme catalyses sn-glycerol 3-phosphate + an acyl-CoA = a 1-acyl-sn-glycero-3-phosphate + CoA. It functions in the pathway phospholipid metabolism; CDP-diacylglycerol biosynthesis; CDP-diacylglycerol from sn-glycerol 3-phosphate: step 1/3. This Xylella fastidiosa (strain M12) protein is Glycerol-3-phosphate acyltransferase.